The following is a 267-amino-acid chain: Nus factor SuhB (267 aa).

Mg(2+) contacts are provided by Glu67, Asp84, and Leu86. Residue Glu67 coordinates substrate. Substrate-binding positions include 86–89 (LDGT), Arg183, and Asp212.

The protein belongs to the inositol monophosphatase superfamily. In terms of assembly, homodimer. The rRNA transcription and antitermination complex (rrnTAC) consists of RNA polymerase (RNAP), NusA, NusB, NusE (rpsJ), NusG, SubB, ribosomal protein S4, DNA and precursor rRNA; S4 is more flexible than other subunits. The cofactor is Mg(2+).

The protein resides in the cytoplasm. It carries out the reaction a myo-inositol phosphate + H2O = myo-inositol + phosphate. Its function is as follows. Part of the processive rRNA transcription and antitermination complex (rrnTAC). The complex forms an RNA-chaperone ring around the RNA exit tunnel of RNA polymerase (RNAP). It supports rapid transcription and antitermination of rRNA operons, cotranscriptional rRNA folding, and annealing of distal rRNA regions to allow correct ribosome biogenesis. This subunit may play a central role in organizing the structure. The polypeptide is Nus factor SuhB (Vibrio cholerae serotype O1 (strain ATCC 39315 / El Tor Inaba N16961)).